Reading from the N-terminus, the 60-residue chain is Potassium channel toxin alpha-KTx 15.8 (60 aa).

Positions 1–22 are cleaved as a signal peptide; sequence MKFSSIILLTLLICSMSIFGNC. Gln23 carries the post-translational modification Pyrrolidone carboxylic acid. 3 cysteine pairs are disulfide-bonded: Cys30-Cys50, Cys35-Cys55, and Cys39-Cys57.

Belongs to the short scorpion toxin superfamily. Potassium channel inhibitor family. Alpha-KTx 15 subfamily. In terms of tissue distribution, expressed by the venom gland.

Its subcellular location is the secreted. Its function is as follows. Blocker of A-type voltage-gated potassium channels of cerebellar granular cells. May also inhibit Kv4/KCND when coexpressed with DPP6 or DPP10. The occlusion of the outer entry of the K(+) conducting pore is partially reversible and affects both open and closed channels. It shares the same target in rat brain than BmTX3 (AC Q8I0L5) and AmmTX3 (AC P60208). Also shows a weak inhibition on Kv1.2/KCNA2 and Kv1.3/KCNA3 voltage-gated potassium channels. The sequence is that of Potassium channel toxin alpha-KTx 15.8 from Olivierus martensii (Manchurian scorpion).